We begin with the raw amino-acid sequence, 117 residues long: Ribonuclease P protein component (117 aa).

This sequence belongs to the RnpA family. Consists of a catalytic RNA component (M1 or rnpB) and a protein subunit.

It catalyses the reaction Endonucleolytic cleavage of RNA, removing 5'-extranucleotides from tRNA precursor.. RNaseP catalyzes the removal of the 5'-leader sequence from pre-tRNA to produce the mature 5'-terminus. It can also cleave other RNA substrates such as 4.5S RNA. The protein component plays an auxiliary but essential role in vivo by binding to the 5'-leader sequence and broadening the substrate specificity of the ribozyme. The protein is Ribonuclease P protein component of Limosilactobacillus reuteri subsp. reuteri (strain JCM 1112) (Lactobacillus reuteri).